Consider the following 902-residue polypeptide: Transcription factor E2F7 (902 aa).

Residue Ser96 is modified to Phosphoserine. A DNA-binding region spans residues 143–212 (RKQKSLGLLC…VAKNQYGWHG (70 aa)). Positions 253–269 (ERRKDGSPDPRDQHLLD) are enriched in basic and acidic residues. A disordered region spans residues 253–283 (ERRKDGSPDPRDQHLLDFSESDYPSSSANSR). Residues 283–368 (RKDKSLRIMS…GRKPAFKWIG (86 aa)) mediate DNA binding. Residue Ser411 is modified to Phosphoserine. Disordered regions lie at residues 418 to 439 (SEKI…KQGP), 589 to 627 (LCEE…SNST), and 665 to 690 (NGFI…DNEI). Basic and acidic residues-rich tracts occupy residues 589 to 611 (LCEE…REFE) and 679 to 690 (PDTEKSSNDNEI). The residue at position 832 (Ser832) is a Phosphoserine. A disordered region spans residues 844-902 (KAEQSPAPATPKSIQRRHRETFFKTPGSLGDPAFRRERNQSRNTSSAQRRLEISSSGPD). Polar residues predominate over residues 884-902 (SRNTSSAQRRLEISSSGPD).

This sequence belongs to the E2F/DP family. In terms of assembly, homodimer and heterodimer: mainly forms homodimers and, to a lesser extent, heterodimers with E2F8. Dimerization is important for DNA-binding. Interacts with HIF1A. Interacts with MN1.

Its subcellular location is the nucleus. Atypical E2F transcription factor that participates in various processes such as angiogenesis, polyploidization of specialized cells and DNA damage response. Mainly acts as a transcription repressor that binds DNA independently of DP proteins and specifically recognizes the E2 recognition site 5'-TTTC[CG]CGC-3'. Directly represses transcription of classical E2F transcription factors such as E2F1. Acts as a regulator of S-phase by recognizing and binding the E2-related site 5'-TTCCCGCC-3' and mediating repression of G1/S-regulated genes. Plays a key role in polyploidization of cells in placenta and liver by regulating the endocycle, probably by repressing genes promoting cytokinesis and antagonizing action of classical E2F proteins (E2F1, E2F2 and/or E2F3). Required for placental development by promoting polyploidization of trophoblast giant cells. Also involved in DNA damage response: up-regulated by p53/TP53 following genotoxic stress and acts as a downstream effector of p53/TP53-dependent repression by mediating repression of indirect p53/TP53 target genes involved in DNA replication. Acts as a promoter of sprouting angiogenesis, possibly by acting as a transcription activator: associates with HIF1A, recognizes and binds the VEGFA promoter, which is different from canonical E2 recognition site, and activates expression of the VEGFA gene. Acts as a negative regulator of keratinocyte differentiation. The chain is Transcription factor E2F7 (E2f7) from Rattus norvegicus (Rat).